The sequence spans 393 residues: Messenger RNA-binding inhibitor of apoptosis 1 (393 aa).

Residues 12–76 (ELYIPQKMKA…EKILRDVWRK (65 aa)) are KH 1-like. The interval 79–157 (VQIMIREAAL…MMIECLTEHF (79 aa)) is KH 2-like. The segment at 259 to 322 (EKIKQWIPTT…NKEQCQEARN (64 aa)) is KH 3-like. A disordered region spans residues 328 to 393 (MQSHQDKPAS…LTPRKLSPSD (66 aa)). The segment covering 345–359 (STPGSPFTSDSSSTT) has biased composition (low complexity).

May interact with wago-4. As to expression, expressed throughout the germline and in oocytes (at protein level).

Its subcellular location is the cytoplasm. It is found in the perinuclear region. RNA-binding protein which binds to its own mRNA and target mRNAs to negatively regulate gene expression to modulate apoptosis and differentiation in the germline. Negatively regulates the expression of the argonaute protein wago-4, and may thus play a role in RNA-mediated gene silencing (RNAi) in the germline. The chain is Messenger RNA-binding inhibitor of apoptosis 1 from Caenorhabditis elegans.